Here is a 240-residue protein sequence, read N- to C-terminus: Insulin-like growth factor-binding protein 3 receptor (240 aa).

The signal sequence occupies residues 1–38 (MGSCQAGHNLHLCLAHHPPLVCATLILLLLGLSGLGLG). Residues 39 to 204 (GFLLTHTTGL…SEELALCGSR (166 aa)) are Extracellular-facing. N-linked (GlcNAc...) asparagine glycosylation is present at Asn167. Residues 205 to 225 (VLGLGFFLVLLCGLLCCTTAV) traverse the membrane as a helical segment. Residues 226–240 (CFHPRPEFHWSRTRL) lie on the Cytoplasmic side of the membrane.

In terms of assembly, interacts with IGFBP3. Interacts with CASP8.

The protein localises to the cell membrane. Cell death receptor specific for IGFBP3, may mediate caspase-8-dependent apoptosis upon ligand binding. The polypeptide is Insulin-like growth factor-binding protein 3 receptor (Tmem219) (Mus musculus (Mouse)).